The primary structure comprises 467 residues: Hydroxyacid-oxoacid transhydrogenase, mitochondrial (467 aa).

K445 carries the N6-acetyllysine modification. At S452 the chain carries Phosphoserine.

The protein belongs to the iron-containing alcohol dehydrogenase family. Hydroxyacid-oxoacid transhydrogenase subfamily. As to expression, expressed in kidney and liver.

The protein resides in the mitochondrion. It catalyses the reaction (S)-3-hydroxybutanoate + 2-oxoglutarate = (R)-2-hydroxyglutarate + acetoacetate. The catalysed reaction is 4-hydroxybutanoate + 2-oxoglutarate = (R)-2-hydroxyglutarate + succinate semialdehyde. Catalyzes the cofactor-independent reversible oxidation of gamma-hydroxybutyrate (GHB) to succinic semialdehyde (SSA) coupled to reduction of 2-ketoglutarate (2-KG) to D-2-hydroxyglutarate (D-2-HG). L-3-hydroxybutyrate (L-3-OHB) is also a substrate for HOT when using 2-KG as hydrogen acceptor, resulting in the formation of D-2-HG. In Rattus norvegicus (Rat), this protein is Hydroxyacid-oxoacid transhydrogenase, mitochondrial (Adhfe1).